Consider the following 111-residue polypeptide: Cytochrome b-c1 complex subunit 7 (111 aa).

Ala-2 is modified (N-acetylalanine). Lys-19 bears the N6-acetyllysine mark. Lys-78 bears the N6-acetyllysine; alternate mark. N6-succinyllysine; alternate is present on Lys-78. Position 83 is an N6-acetyllysine (Lys-83). Position 88 is an N6-acetyllysine; alternate (Lys-88). Lys-88 is modified (N6-succinyllysine; alternate). An N6-acetyllysine modification is found at Lys-96.

Belongs to the UQCRB/QCR7 family. Component of the ubiquinol-cytochrome c oxidoreductase (cytochrome b-c1 complex, complex III, CIII), a multisubunit enzyme composed of 11 subunits. The complex is composed of 3 respiratory subunits cytochrome b, cytochrome c1 and Rieske protein UQCRFS1, 2 core protein subunits UQCRC1/QCR1 and UQCRC2/QCR2, and 6 low-molecular weight protein subunits UQCRH/QCR6, UQCRB/QCR7, UQCRQ/QCR8, UQCR10/QCR9, UQCR11/QCR10 and subunit 9, the cleavage product of Rieske protein UQCRFS1. The complex exists as an obligatory dimer and forms supercomplexes (SCs) in the inner mitochondrial membrane with NADH-ubiquinone oxidoreductase (complex I, CI) and cytochrome c oxidase (complex IV, CIV), resulting in different assemblies (supercomplex SCI(1)III(2)IV(1) and megacomplex MCI(2)III(2)IV(2)).

Its subcellular location is the mitochondrion inner membrane. In terms of biological role, component of the ubiquinol-cytochrome c oxidoreductase, a multisubunit transmembrane complex that is part of the mitochondrial electron transport chain which drives oxidative phosphorylation. The respiratory chain contains 3 multisubunit complexes succinate dehydrogenase (complex II, CII), ubiquinol-cytochrome c oxidoreductase (cytochrome b-c1 complex, complex III, CIII) and cytochrome c oxidase (complex IV, CIV), that cooperate to transfer electrons derived from NADH and succinate to molecular oxygen, creating an electrochemical gradient over the inner membrane that drives transmembrane transport and the ATP synthase. The cytochrome b-c1 complex catalyzes electron transfer from ubiquinol to cytochrome c, linking this redox reaction to translocation of protons across the mitochondrial inner membrane, with protons being carried across the membrane as hydrogens on the quinol. In the process called Q cycle, 2 protons are consumed from the matrix, 4 protons are released into the intermembrane space and 2 electrons are passed to cytochrome c. In Bos taurus (Bovine), this protein is Cytochrome b-c1 complex subunit 7 (UQCRB).